A 191-amino-acid chain; its full sequence is Protein Ves (191 aa).

It belongs to the Ves family.

The protein is Protein Ves of Shigella boydii serotype 18 (strain CDC 3083-94 / BS512).